Here is a 554-residue protein sequence, read N- to C-terminus: MAYYRTPHDVTALPAWQALNQHRQAMQDFSMREAFNADPQRFSQFTLSSCGLFLDYSKNLITSETRDLLVGLAKEVGLKDAINSLYAGEPVNSSEGRPALHTALRRPVGDKLSVNGVNIMPDVHKVLNQITDLVGRIHDGLWRGYTEKPITDVVNIGIGGSFLGPELVSEALLSYAHKGVRCHYLANIDGSEFHELTMKLRAETTLFIVSSKSFNTLETLKNAQAARAWYLAQGGSEAELYRHFIAVSSNNAAAVAFGIREENIFPMWDWVGGRYSLWSAIGLPIALAIGMSNFKELLSGAYTMDQHFQNAPFEANMPVLLGLLGVWYGNFWGAQSHAILPYDHYLRNITKHLQQLDMESNGKSVRQDGTPVATDTGPVIWGGVGCNGQHAYHQLLHQGTQLIPADFIVPIVSFNPVSDHHQWLYANCLSQSQALMLGKTRVEAEAELRDKGIPEDEVQKLAPHKVIPGNRPSNTLVVERISPRRLGALVAMYEHKVFVQSVIWGINAFDQWGVELGKELGKGVYNRLTGAEETSAEDASTQGLINYFRGRHRG.

Glu359 functions as the Proton donor in the catalytic mechanism. Active-site residues include His390 and Lys518.

This sequence belongs to the GPI family.

The protein resides in the cytoplasm. The catalysed reaction is alpha-D-glucose 6-phosphate = beta-D-fructose 6-phosphate. It participates in carbohydrate biosynthesis; gluconeogenesis. The protein operates within carbohydrate degradation; glycolysis; D-glyceraldehyde 3-phosphate and glycerone phosphate from D-glucose: step 2/4. Catalyzes the reversible isomerization of glucose-6-phosphate to fructose-6-phosphate. This chain is Glucose-6-phosphate isomerase, found in Pseudomonas fluorescens (strain SBW25).